A 627-amino-acid chain; its full sequence is BEL1-like homeodomain protein 4 (627 aa).

The segment at 206–225 (SSQHHHHQVVGHFGSSSSSP) is disordered. The segment covering 215-225 (VGHFGSSSSSP) has biased composition (low complexity). The SR/KY domain stretch occupies residues 241–257 (SKYTKPAQELLEEFCSV). Residues 263-307 (KKNKLSRNNSNPNTTGGGGGGGSSSSAGTANDSPPLSPADRIEHQ) are disordered. Residues 302–373 (DRIEHQRRKV…CLKDAVAVQL (72 aa)) form a BELL domain region. Positions 424–486 (AWRPQRGLPE…NARVRLWKPM (63 aa)) form a DNA-binding region, homeobox. The interval 494-530 (EAKEREEAEEENENQQQQRRQQQTNNNDTKPNNNENN) is disordered. A compositionally biased stretch (low complexity) spans 507 to 530 (NQQQQRRQQQTNNNDTKPNNNENN).

The protein belongs to the TALE/BELL homeobox family. In terms of assembly, may form heterodimeric complexes with TALE/KNOX proteins. Interacts with OFP1, OFP2 and OFP5. Interacts with KNATM, isoform KNATM-B. As to expression, expressed in lateral organs.

It is found in the nucleus. In terms of biological role, transcription factor that establishes leaf shape by repressing growth in specific subdomains of the leaf. Negatively regulates knox homeobox gene KNAT1/BP expression. This Arabidopsis thaliana (Mouse-ear cress) protein is BEL1-like homeodomain protein 4 (BLH4).